We begin with the raw amino-acid sequence, 170 residues long: Penton capsid protein P1 (170 aa).

The tract at residues 1 to 25 (MVETTQHFVSIESSNRPDPANTTPA) is disordered. N-linked (Glc...) asparagine; by host glycans are attached at residues Asn-21, Asn-93, Asn-129, and Asn-137.

Post-translationally, glycosylated. The pattern of glycosylation sites are unusual.

It localises to the virion. Its function is as follows. Constitutes the 12 pentameric capsomers positioned at the 5-fold vertices of the outer capsid shell. One of the vertex is composed of a variant of P1 (type II pentameric capsomer) and has thereby a structure slightly different from the other verteces (type I pentameric capsomers). This Paramecium bursaria Chlorella virus 1 (PBCV-1) protein is Penton capsid protein P1.